The primary structure comprises 381 residues: L-lactate dehydrogenase (381 aa).

Residues M1–K380 enclose the FMN hydroxy acid dehydrogenase domain. Y24 serves as a coordination point for substrate. FMN contacts are provided by S106 and Q127. Position 129 (Y129) interacts with substrate. FMN is bound at residue T155. R164 provides a ligand contact to substrate. Residue K251 coordinates FMN. The Proton acceptor role is filled by H275. R278 provides a ligand contact to substrate. D306–R330 is an FMN binding site.

The protein belongs to the FMN-dependent alpha-hydroxy acid dehydrogenase family. FMN serves as cofactor.

The protein localises to the cell inner membrane. The enzyme catalyses (S)-lactate + A = pyruvate + AH2. Catalyzes the conversion of L-lactate to pyruvate. Is coupled to the respiratory chain. The sequence is that of L-lactate dehydrogenase from Actinobacillus pleuropneumoniae serotype 5b (strain L20).